We begin with the raw amino-acid sequence, 1445 residues long: ABC-type transporter FGSG_00046 (1445 aa).

11 helical membrane-spanning segments follow: residues 21-41 (LFEE…MLLV), 77-97 (LILW…AAAL), 119-138 (PSSL…VTRV), 150-170 (ISIL…FESL), 187-207 (EIVG…FILG), 255-277 (TLLR…PLLL), 297-317 (YGLI…TALA), 368-388 (LQFV…IFLL), 392-412 (VALG…GTVL), 481-501 (VFST…YVLM), and 520-540 (SLFS…PAIF). The 283-residue stretch at 259–541 (GGLCRLFTAL…FLTSVPAIFS (283 aa)) folds into the ABC transmembrane type-1 1 domain. The ABC transporter 1 domain occupies 595–821 (IRDGSVRWKG…DEIEASTYSR (227 aa)). 627–634 (GSVGSGKS) serves as a coordination point for ATP. Residues 803 to 850 (RNTQKDMQDDEIEASTYSREQNGPKKQEEDANHESNQSPETSQEHELA) form a disordered region. Over residues 824–835 (NGPKKQEEDANH) the composition is skewed to basic and acidic residues. Transmembrane regions (helical) follow at residues 868–888 (GMGF…WQNF), 912–932 (IGVY…VTWF), 1004–1024 (IPLT…QLVM), 1026–1046 (SIGT…LAII), 1116–1136 (LTLV…GVTI), and 1147–1167 (IGLA…LLTW). One can recognise an ABC transmembrane type-1 2 domain in the interval 974–1173 (HRAPMSYFES…LLTWWTMMEA (200 aa)). One can recognise an ABC transporter 2 domain in the interval 1210–1441 (IELKELSASY…DVSLFQDLFS (232 aa)). 1244 to 1251 (GRTGSGKT) is a binding site for ATP.

This sequence belongs to the ABC transporter superfamily. ABCC family.

The protein localises to the cell membrane. In terms of biological role, ABC-type transporter; part of the gene cluster that mediates the biosynthesis of gramillins A and B, bicyclic lipopeptides that induce cell death in maize leaves but not in wheat leaves. May be involved in the secretion of gramillins. The chain is ABC-type transporter FGSG_00046 from Gibberella zeae (strain ATCC MYA-4620 / CBS 123657 / FGSC 9075 / NRRL 31084 / PH-1) (Wheat head blight fungus).